A 1297-amino-acid chain; its full sequence is Probable bifunctional E2/E3 enzyme R795 (1297 aa).

The RING-type; atypical zinc-finger motif lies at 74 to 128; that stretch reads CAICRYQENEPCIEHKSSESNTKCPIAQSVSCSHSFHACCISRWLHTKKTCPLCN. In terms of domain architecture, U-box spans 678-750; the sequence is EPLQEFLCPI…RDWKENNTVI (73 aa). Positions 899–1082 constitute a VWFA domain; sequence EMTLEIHSSN…LDIMELETMI (184 aa). A UBC core domain is found at 1133-1279; the sequence is QKLIRVQREI…IIDYVNKFAL (147 aa). Cys-1217 (glycyl thioester intermediate) is an active-site residue.

The protein in the C-terminal section; belongs to the ubiquitin-conjugating enzyme family.

It catalyses the reaction S-ubiquitinyl-[E2 ubiquitin-conjugating enzyme]-L-cysteine + [acceptor protein]-L-lysine = [E2 ubiquitin-conjugating enzyme]-L-cysteine + N(6)-ubiquitinyl-[acceptor protein]-L-lysine.. The catalysed reaction is S-ubiquitinyl-[E1 ubiquitin-activating enzyme]-L-cysteine + [E2 ubiquitin-conjugating enzyme]-L-cysteine = [E1 ubiquitin-activating enzyme]-L-cysteine + S-ubiquitinyl-[E2 ubiquitin-conjugating enzyme]-L-cysteine.. It participates in protein modification; protein ubiquitination. Catalyzes the covalent attachment of ubiquitin to other proteins. Also acts as an E3 ubiquitin-protein ligase. The protein is Probable bifunctional E2/E3 enzyme R795 of Acanthamoeba polyphaga (Amoeba).